The chain runs to 293 residues: Protease HtpX (293 aa).

2 helical membrane-spanning segments follow: residues 4–24 and 34–54; these read IALF…VLSL and GLMI…LLMS. A Zn(2+)-binding site is contributed by His-139. Glu-140 is an active-site residue. His-143 contributes to the Zn(2+) binding site. 2 helical membrane-spanning segments follow: residues 158–178 and 193–213; these read VVNT…AGFM and LIYF…ASII. Glu-222 lines the Zn(2+) pocket.

The protein belongs to the peptidase M48B family. Requires Zn(2+) as cofactor.

Its subcellular location is the cell inner membrane. This Escherichia coli O127:H6 (strain E2348/69 / EPEC) protein is Protease HtpX.